The following is a 443-amino-acid chain: 3-phosphoshikimate 1-carboxyvinyltransferase (443 aa).

3-phosphoshikimate is bound by residues lysine 24, serine 25, and arginine 29. Residue lysine 24 coordinates phosphoenolpyruvate. Positions 95 and 123 each coordinate phosphoenolpyruvate. Residues serine 167, glutamine 169, aspartate 323, and lysine 350 each contribute to the 3-phosphoshikimate site. A phosphoenolpyruvate-binding site is contributed by glutamine 169. The Proton acceptor role is filled by aspartate 323. Arginine 354 and arginine 398 together coordinate phosphoenolpyruvate.

Belongs to the EPSP synthase family. Monomer.

It is found in the cytoplasm. The enzyme catalyses 3-phosphoshikimate + phosphoenolpyruvate = 5-O-(1-carboxyvinyl)-3-phosphoshikimate + phosphate. It functions in the pathway metabolic intermediate biosynthesis; chorismate biosynthesis; chorismate from D-erythrose 4-phosphate and phosphoenolpyruvate: step 6/7. In terms of biological role, catalyzes the transfer of the enolpyruvyl moiety of phosphoenolpyruvate (PEP) to the 5-hydroxyl of shikimate-3-phosphate (S3P) to produce enolpyruvyl shikimate-3-phosphate and inorganic phosphate. This is 3-phosphoshikimate 1-carboxyvinyltransferase from Caulobacter vibrioides (strain ATCC 19089 / CIP 103742 / CB 15) (Caulobacter crescentus).